Consider the following 256-residue polypeptide: DNA repair protein RecO (256 aa).

It belongs to the RecO family.

In terms of biological role, involved in DNA repair and RecF pathway recombination. This Thiobacillus denitrificans (strain ATCC 25259 / T1) protein is DNA repair protein RecO.